We begin with the raw amino-acid sequence, 398 residues long: Succinate--CoA ligase [ADP-forming] subunit beta (398 aa).

The region spanning 9-254 (KALLHEFGVP…ETEEDAKEIE (246 aa)) is the ATP-grasp domain. Residues lysine 46, 53–55 (GRG), glutamate 109, serine 112, and glutamate 117 each bind ATP. Residues asparagine 209 and aspartate 223 each coordinate Mg(2+). Substrate contacts are provided by residues asparagine 274 and 331 to 333 (GIM).

The protein belongs to the succinate/malate CoA ligase beta subunit family. In terms of assembly, heterotetramer of two alpha and two beta subunits. Mg(2+) serves as cofactor.

The enzyme catalyses succinate + ATP + CoA = succinyl-CoA + ADP + phosphate. The catalysed reaction is GTP + succinate + CoA = succinyl-CoA + GDP + phosphate. Its pathway is carbohydrate metabolism; tricarboxylic acid cycle; succinate from succinyl-CoA (ligase route): step 1/1. Its function is as follows. Succinyl-CoA synthetase functions in the citric acid cycle (TCA), coupling the hydrolysis of succinyl-CoA to the synthesis of either ATP or GTP and thus represents the only step of substrate-level phosphorylation in the TCA. The beta subunit provides nucleotide specificity of the enzyme and binds the substrate succinate, while the binding sites for coenzyme A and phosphate are found in the alpha subunit. The chain is Succinate--CoA ligase [ADP-forming] subunit beta from Bradyrhizobium sp. (strain ORS 278).